The following is a 543-amino-acid chain: Protein lin-14 (543 aa).

Disordered regions lie at residues 165–228 and 268–291; these read PNGH…SSNH and APATNGTTNGATKAAGPERKPRKP. The segment covering 177–213 has biased composition (polar residues); it reads SMQTDEQQVKWSSPSSVDSNGQKTDSSAASAGDNQNI. Residues 268–282 are compositionally biased toward low complexity; it reads APATNGTTNGATKAA.

In terms of processing, cleaved by caspase ced-3 in vitro.

Its subcellular location is the nucleus. In terms of biological role, heterochronic protein which controls the choice of stage specific cell fates. Involved in the temporal progression of vulval fate patterning, possibly by inhibiting lin-12. Acts as a transcription factor involved in the stage-specific repression of insulin/insulin-like growth factor gene ins-33. The chain is Protein lin-14 (lin-14) from Caenorhabditis briggsae.